An 89-amino-acid chain; its full sequence is Small ribosomal subunit protein uS15 (89 aa).

Belongs to the universal ribosomal protein uS15 family. As to quaternary structure, part of the 30S ribosomal subunit. Forms a bridge to the 50S subunit in the 70S ribosome, contacting the 23S rRNA.

Its function is as follows. One of the primary rRNA binding proteins, it binds directly to 16S rRNA where it helps nucleate assembly of the platform of the 30S subunit by binding and bridging several RNA helices of the 16S rRNA. Functionally, forms an intersubunit bridge (bridge B4) with the 23S rRNA of the 50S subunit in the ribosome. This chain is Small ribosomal subunit protein uS15, found in Streptococcus suis (strain 98HAH33).